The sequence spans 1141 residues: Isoleucine--tRNA ligase (1141 aa).

The 'HIGH' region motif lies at 50-60 (PSANGMPGIHH). The 'KMSKS' region motif lies at 689–693 (KMSKR). An ATP-binding site is contributed by K692.

Belongs to the class-I aminoacyl-tRNA synthetase family. IleS type 2 subfamily. Monomer. Zn(2+) is required as a cofactor.

It is found in the cytoplasm. The enzyme catalyses tRNA(Ile) + L-isoleucine + ATP = L-isoleucyl-tRNA(Ile) + AMP + diphosphate. Functionally, catalyzes the attachment of isoleucine to tRNA(Ile). As IleRS can inadvertently accommodate and process structurally similar amino acids such as valine, to avoid such errors it has two additional distinct tRNA(Ile)-dependent editing activities. One activity is designated as 'pretransfer' editing and involves the hydrolysis of activated Val-AMP. The other activity is designated 'posttransfer' editing and involves deacylation of mischarged Val-tRNA(Ile). The chain is Isoleucine--tRNA ligase from Bacteroides fragilis (strain YCH46).